The sequence spans 725 residues: Envelope glycoprotein H (725 aa).

An N-terminal signal peptide occupies residues 1-19 (MKLSLILSIALCSTRVVYA). Over 20–700 (AGAEAPRISR…LVNVRPSMPY (681 aa)) the chain is Virion surface. N-linked (GlcNAc...) asparagine; by host glycosylation is found at Asn38 and Asn50. The interval 184–247 (TGYTVTVSLA…QTPDHDLLVV (64 aa)) is interaction with gL. N-linked (GlcNAc...) asparagine; by host glycosylation is found at Asn319, Asn459, Asn621, and Asn681. The helical transmembrane segment at 701–721 (SVVVALVIIAILMALGLYRLC) threads the bilayer. Residues 722–725 (RQKR) are Intravirion-facing.

It belongs to the herpesviridae glycoprotein H family. In terms of assembly, interacts with glycoprotein L (gL); this interaction is necessary for the correct processing and cell surface expression of gH. The heterodimer gH/gL seems to interact with gB trimers during fusion. In terms of processing, N-glycosylated, O-glycosylated, and sialylated.

The protein resides in the virion membrane. The protein localises to the host cell membrane. It localises to the host endosome membrane. Its function is as follows. The heterodimer glycoprotein H-glycoprotein L is required for the fusion of viral and plasma membranes leading to virus entry into the host cell. Following initial binding to host receptor, membrane fusion is mediated by the fusion machinery composed of gB and the heterodimer gH/gL. May also be involved in the fusion between the virion envelope and the outer nuclear membrane during virion morphogenesis. The protein is Envelope glycoprotein H of Murid herpesvirus 1 (strain Smith) (MuHV-1).